Reading from the N-terminus, the 1399-residue chain is Meiosis-specific protein ASY2 (1399 aa).

The HORMA domain maps to 10–248 (QQSLILTTEL…SQHHVLTVKV (239 aa)). Residues 257 to 266 (PCEDENDNMQ) are compositionally biased toward acidic residues. 5 disordered regions span residues 257-281 (PCED…HDDQ), 487-525 (SKPK…SSEP), 617-656 (RLTG…AAPE), 940-974 (PPPP…VDQV), and 1045-1090 (DQDK…AAPK). Basic and acidic residues predominate over residues 267-281 (DDERSKGPDSLHDDQ). The span at 509 to 523 (SAPPSSEPKSAPPSS) shows a compositional bias: pro residues. Over residues 617–631 (RLTGNPSNEAQSSRS) the composition is skewed to polar residues. A coiled-coil region spans residues 1205 to 1246 (MASLRDAAEIHKAEMSSLNDEVKRLNSREADLQKEFSDLQVA).

The protein localises to the chromosome. The protein resides in the nucleus. Its function is as follows. Required for normal meiosis. This Arabidopsis thaliana (Mouse-ear cress) protein is Meiosis-specific protein ASY2.